The chain runs to 321 residues: Tyrosine recombinase XerC (321 aa).

The 92-residue stretch at 16–107 folds into the Core-binding (CB) domain; it reads PSIAQEMTRW…GLRSFGRFLE (92 aa). The region spanning 128–315 is the Tyr recombinase domain; that stretch reads SLPKPLPMAS…DSERLLEVYA (188 aa). Active-site residues include Arg-173, Lys-199, His-267, Arg-270, and His-293. Tyr-302 acts as the O-(3'-phospho-DNA)-tyrosine intermediate in catalysis.

Belongs to the 'phage' integrase family. XerC subfamily. In terms of assembly, forms a cyclic heterotetrameric complex composed of two molecules of XerC and two molecules of XerD.

It is found in the cytoplasm. Its function is as follows. Site-specific tyrosine recombinase, which acts by catalyzing the cutting and rejoining of the recombining DNA molecules. The XerC-XerD complex is essential to convert dimers of the bacterial chromosome into monomers to permit their segregation at cell division. It also contributes to the segregational stability of plasmids. This Bradyrhizobium diazoefficiens (strain JCM 10833 / BCRC 13528 / IAM 13628 / NBRC 14792 / USDA 110) protein is Tyrosine recombinase XerC.